The primary structure comprises 311 residues: Urease accessory protein UreD 2 (311 aa).

It belongs to the UreD family. UreD, UreF and UreG form a complex that acts as a GTP-hydrolysis-dependent molecular chaperone, activating the urease apoprotein by helping to assemble the nickel containing metallocenter of UreC. The UreE protein probably delivers the nickel.

The protein localises to the cytoplasm. Functionally, required for maturation of urease via the functional incorporation of the urease nickel metallocenter. This Methylorubrum extorquens (strain PA1) (Methylobacterium extorquens) protein is Urease accessory protein UreD 2.